The sequence spans 300 residues: Acetaldehyde dehydrogenase (300 aa).

10-13 (SGNI) is an NAD(+) binding site. The active-site Acyl-thioester intermediate is cysteine 129. Residues 160 to 168 (SAGPGTRKN) and asparagine 271 contribute to the NAD(+) site.

Belongs to the acetaldehyde dehydrogenase family.

The enzyme catalyses acetaldehyde + NAD(+) + CoA = acetyl-CoA + NADH + H(+). The protein is Acetaldehyde dehydrogenase of Alkalilimnicola ehrlichii (strain ATCC BAA-1101 / DSM 17681 / MLHE-1).